The primary structure comprises 1044 residues: Integrin alpha-V (1044 aa).

A signal peptide spans methionine 1–alanine 30. The Extracellular portion of the chain corresponds to phenylalanine 31–valine 988. 7 FG-GAP repeats span residues asparagine 32–glutamine 98, aspartate 109–alanine 170, arginine 173–tyrosine 225, glutamine 237–methionine 291, serine 292–glutamine 357, threonine 358–serine 415, and glutamine 419–serine 482. N-linked (GlcNAc...) asparagine glycosylation is present at asparagine 74. Disulfide bonds link cysteine 89–cysteine 97, cysteine 138–cysteine 158, and cysteine 172–cysteine 185. Aspartate 260, asparagine 262, aspartate 264, isoleucine 266, and aspartate 268 together coordinate Ca(2+). N-linked (GlcNAc...) asparagine glycosylation is found at asparagine 290 and asparagine 296. Ca(2+) contacts are provided by aspartate 314, asparagine 316, aspartate 318, tyrosine 320, aspartate 322, aspartate 379, aspartate 381, aspartate 383, phenylalanine 385, aspartate 387, aspartate 443, aspartate 445, asparagine 447, tyrosine 449, and aspartate 451. Intrachain disulfides connect cysteine 491-cysteine 502 and cysteine 508-cysteine 565. Asparagine 615 is a glycosylation site (N-linked (GlcNAc...) asparagine). Disulfide bonds link cysteine 626–cysteine 632 and cysteine 698–cysteine 711. Residues asparagine 704, asparagine 835, asparagine 851, and asparagine 869 are each glycosylated (N-linked (GlcNAc...) asparagine). 2 cysteine pairs are disulfide-bonded: cysteine 852–cysteine 910 and cysteine 900–cysteine 905. N-linked (GlcNAc...) asparagine glycosylation is found at asparagine 941, asparagine 969, and asparagine 976. Residues proline 989–tyrosine 1012 traverse the membrane as a helical segment. Topologically, residues arginine 1013–threonine 1044 are cytoplasmic. The short motif at glycine 1015–arginine 1019 is the GFFKR motif element. Residues proline 1023–glycine 1038 are compositionally biased toward basic and acidic residues. The segment at proline 1023–threonine 1044 is disordered.

It belongs to the integrin alpha chain family. In terms of assembly, heterodimer of an alpha and a beta subunit. The alpha subunit is composed of a heavy and a light chain linked by a disulfide bond. Alpha-V (ITGAV) associates with either beta-1 (ITGB1), beta-3 (ITGB3), beta-5 (ITGB5), beta-6 (ITGB6) or beta-8 (ITGB8). Interacts with RAB25. Interacts with CIB1. Integrins ITGAV:ITGB3 and ITGAV:ITGB5 interact with FBLN5 (via N-terminus). ITGAV:ITGB3 and ITGAV:ITGB5 interact with CCN3. ITGAV:ITGB3 interacts with ADGRA2. ITGAV:ITGB3 interacts with FGF2; it is likely that FGF2 can simultaneously bind ITGAV:ITGB3 and FGF receptors. ITGAV:ITGB3 interacts with SELP (via C-type lectin domain); the interaction mediates cell-cell interaction and adhesion. ITGAV:ITGB3 is found in a ternary complex with CX3CR1 and CX3CL1. ITGAV:ITGB3 is found in a ternary complex with NRG1 and ERBB3. ITGAV:ITGB3 is found in a ternary complex with FGF1 and FGFR1. ITGAV:ITGB3 is found in a ternary complex with IGF1 and IGF1R. ITGAV:ITGB3 interacts with IGF2. ITGAV:ITGB3 and ITGAV:ITGB6 interact with FBN1. ITGAV:ITGB3 interacts with CD9, CD81 and CD151 (via second extracellular domain). ITGAV:ITGB6 interacts with TGFB1. ITGAV:ITGB3 interacts with PTN. Forms a complex with PTPRZ1 and PTN that stimulates endothelial cell migration through ITGB3 'Tyr-773' phosphorylation. Interacts with TM4SF19.

It localises to the cell membrane. Its subcellular location is the cell junction. The protein resides in the focal adhesion. Functionally, the alpha-V (ITGAV) integrins are receptors for vitronectin, cytotactin, fibronectin, fibrinogen, laminin, matrix metalloproteinase-2, osteopontin, osteomodulin, prothrombin, thrombospondin, TGFB1 and vWF. They recognize the sequence R-G-D in a wide array of ligands. Alpha-V integrins may play a role in embryo implantation, angiogenesis and wound healing. ITGAV:ITGB3 binds to fractalkine (CX3CL1) and may act as its coreceptor in CX3CR1-dependent fractalkine signaling. ITGAV:ITGB3 binds to NRG1 (via EGF domain) and this binding is essential for NRG1-ERBB signaling. ITGAV:ITGB3 binds to FGF1 and this binding is essential for FGF1 signaling. ITGAV:ITGB3 binds to FGF2 and this binding is essential for FGF2 signaling. ITGAV:ITGB3 binds to IGF1 and this binding is essential for IGF1 signaling. ITGAV:ITGB3 binds to IGF2 and this binding is essential for IGF2 signaling. ITGAV:ITGB3 binds to IL1B and this binding is essential for IL1B signaling. ITGAV:ITGB3 binds to PLA2G2A via a site (site 2) which is distinct from the classical ligand-binding site (site 1) and this induces integrin conformational changes and enhanced ligand binding to site 1. ITGAV:ITGB3 and ITGAV:ITGB6 act as a receptor for fibrillin-1 (FBN1) and mediate R-G-D-dependent cell adhesion to FBN1. Integrin alpha-V/beta-6 or alpha-V/beta-8 (ITGAV:ITGB6 or ITGAV:ITGB8) mediates R-G-D-dependent release of transforming growth factor beta-1 (TGF-beta-1) from regulatory Latency-associated peptide (LAP), thereby playing a key role in TGF-beta-1 activation. ITGAV:ITGB3 acts as a receptor for CD40LG. ITGAV:ITGB3 binds to the Lilrb4a/Gp49b receptor and enhances the Lilrb4a-mediated inhibition of mast cell activation. ITGAV:ITGB3 also suppresses marginal zone B cell antibody production through its interaction with Lilrb4a. ITGAV:ITGB3 acts as a receptor for IBSP and promotes cell adhesion and migration to IBSP. This chain is Integrin alpha-V (Itgav), found in Mus musculus (Mouse).